The chain runs to 946 residues: Bifunctional glutamine synthetase adenylyltransferase/adenylyl-removing enzyme (946 aa).

Residues 1-440 form an adenylyl removase region; it reads MKPLSSPLQQ…VFNELIGDDE (440 aa). Residues 449–946 are adenylyl transferase; it reads SEQWRELWQD…ASWQKWLVEE (498 aa).

The protein belongs to the GlnE family. Mg(2+) serves as cofactor.

It catalyses the reaction [glutamine synthetase]-O(4)-(5'-adenylyl)-L-tyrosine + phosphate = [glutamine synthetase]-L-tyrosine + ADP. The enzyme catalyses [glutamine synthetase]-L-tyrosine + ATP = [glutamine synthetase]-O(4)-(5'-adenylyl)-L-tyrosine + diphosphate. In terms of biological role, involved in the regulation of glutamine synthetase GlnA, a key enzyme in the process to assimilate ammonia. When cellular nitrogen levels are high, the C-terminal adenylyl transferase (AT) inactivates GlnA by covalent transfer of an adenylyl group from ATP to specific tyrosine residue of GlnA, thus reducing its activity. Conversely, when nitrogen levels are low, the N-terminal adenylyl removase (AR) activates GlnA by removing the adenylyl group by phosphorolysis, increasing its activity. The regulatory region of GlnE binds the signal transduction protein PII (GlnB) which indicates the nitrogen status of the cell. This Shigella boydii serotype 18 (strain CDC 3083-94 / BS512) protein is Bifunctional glutamine synthetase adenylyltransferase/adenylyl-removing enzyme.